A 595-amino-acid polypeptide reads, in one-letter code: Protein LUTEIN DEFICIENT 5, chloroplastic (595 aa).

The transit peptide at 1–28 (MAMAFPLSYTPTITVKPVTYSRRSNFVV) directs the protein to the chloroplast. Residue Cys-516 coordinates heme.

The protein belongs to the cytochrome P450 family. The cofactor is heme.

The protein localises to the plastid. Its subcellular location is the chloroplast. Heme-containing cytochrome P450 involved in the biosynthesis of xanthophylls. Specific for beta-ring hydroxylation of alpha- and beta-carotene. Also has a low activity toward the epsilon-rings of alpha-carotene. The beta-ring of alpha-carotene is the preferred substrate in planta. The polypeptide is Protein LUTEIN DEFICIENT 5, chloroplastic (CYP97A3) (Arabidopsis thaliana (Mouse-ear cress)).